We begin with the raw amino-acid sequence, 160 residues long: Epithelial membrane protein 1 (160 aa).

The helical transmembrane segment at 1 to 21 (MLVLLAGLFVVHIATAIMLFV) threads the bilayer. N-linked (GlcNAc...) asparagine glycosylation is present at Asn43. 3 helical membrane passes run 67 to 87 (FMIL…FQLF), 95 to 115 (FFLS…GVSI), and 137 to 157 (FILT…YMVL).

It belongs to the PMP-22/EMP/MP20 family. Most prominently found in the gastrointestinal tract, skin, lung, and brain but not in liver.

Its subcellular location is the membrane. This Rattus norvegicus (Rat) protein is Epithelial membrane protein 1 (Emp1).